Consider the following 63-residue polypeptide: Beta-defensin 5 (63 aa).

Positions M1–T22 are cleaved as a signal peptide. Q23 bears the Pyrrolidone carboxylic acid mark. Cystine bridges form between C31–C59, C38–C52, and C42–C60.

The protein belongs to the beta-defensin family.

Its subcellular location is the secreted. Its function is as follows. Has antibacterial activity. This chain is Beta-defensin 5 (Defb5), found in Rattus norvegicus (Rat).